A 130-amino-acid chain; its full sequence is Small ribosomal subunit protein uS8 (130 aa).

Belongs to the universal ribosomal protein uS8 family. As to quaternary structure, part of the 30S ribosomal subunit.

In terms of biological role, one of the primary rRNA binding proteins, it binds directly to 16S rRNA central domain where it helps coordinate assembly of the platform of the 30S subunit. This is Small ribosomal subunit protein uS8 from Methanopyrus kandleri (strain AV19 / DSM 6324 / JCM 9639 / NBRC 100938).